Reading from the N-terminus, the 118-residue chain is Small ribosomal subunit protein uS13 (118 aa).

The segment at 94–118 (SLPLRGQRTKTNARTRKGPRKPIKR) is disordered.

Belongs to the universal ribosomal protein uS13 family. Part of the 30S ribosomal subunit. Forms a loose heterodimer with protein S19. Forms two bridges to the 50S subunit in the 70S ribosome.

Located at the top of the head of the 30S subunit, it contacts several helices of the 16S rRNA. In the 70S ribosome it contacts the 23S rRNA (bridge B1a) and protein L5 of the 50S subunit (bridge B1b), connecting the 2 subunits; these bridges are implicated in subunit movement. Contacts the tRNAs in the A and P-sites. This Photobacterium profundum (strain SS9) protein is Small ribosomal subunit protein uS13.